Here is a 153-residue protein sequence, read N- to C-terminus: Large ribosomal subunit protein uL15 (153 aa).

The interval 21 to 41 (RGIGSGKGKTGGRGIKGQKSR) is disordered. Over residues 23 to 35 (IGSGKGKTGGRGI) the composition is skewed to gly residues.

It belongs to the universal ribosomal protein uL15 family. Part of the 50S ribosomal subunit.

Binds to the 23S rRNA. This is Large ribosomal subunit protein uL15 from Rickettsia felis (strain ATCC VR-1525 / URRWXCal2) (Rickettsia azadi).